Consider the following 268-residue polypeptide: Taurine import ATP-binding protein TauB (268 aa).

In terms of domain architecture, ABC transporter spans 4 to 236 (LSIENISMRF…MGVNADLREV (233 aa)). 41–48 (GPSGCGKT) serves as a coordination point for ATP.

The protein belongs to the ABC transporter superfamily. Taurine importer (TC 3.A.1.17.1) family. As to quaternary structure, the complex is composed of two ATP-binding proteins (TauB), two transmembrane proteins (TauC) and a solute-binding protein (TauA).

It localises to the cell inner membrane. It carries out the reaction taurine(out) + ATP + H2O = taurine(in) + ADP + phosphate + H(+). Part of the ABC transporter complex TauABC involved in taurine import. Responsible for energy coupling to the transport system. The polypeptide is Taurine import ATP-binding protein TauB (Ruegeria pomeroyi (strain ATCC 700808 / DSM 15171 / DSS-3) (Silicibacter pomeroyi)).